We begin with the raw amino-acid sequence, 72 residues long: MAKEGNIEMEGTIIDTLPNTMFRVQLENGHVVTAHISGKMRKNYIRILTGDKVKVEMTPYDLSKGRIVYRAR.

The 72-residue stretch at 1–72 folds into the S1-like domain; the sequence is MAKEGNIEME…SKGRIVYRAR (72 aa).

The protein belongs to the IF-1 family. As to quaternary structure, component of the 30S ribosomal translation pre-initiation complex which assembles on the 30S ribosome in the order IF-2 and IF-3, IF-1 and N-formylmethionyl-tRNA(fMet); mRNA recruitment can occur at any time during PIC assembly.

Its subcellular location is the cytoplasm. Its function is as follows. One of the essential components for the initiation of protein synthesis. Stabilizes the binding of IF-2 and IF-3 on the 30S subunit to which N-formylmethionyl-tRNA(fMet) subsequently binds. Helps modulate mRNA selection, yielding the 30S pre-initiation complex (PIC). Upon addition of the 50S ribosomal subunit IF-1, IF-2 and IF-3 are released leaving the mature 70S translation initiation complex. The chain is Translation initiation factor IF-1 from Hahella chejuensis (strain KCTC 2396).